A 191-amino-acid polypeptide reads, in one-letter code: Programmed cell death protein 6 (191 aa).

Ala2 is modified (N-acetylalanine). EF-hand domains lie at 23-58 (PDQS…GTWT), 59-89 (PFNP…TGVW), 90-125 (KYIT…FGYR), 126-161 (LSDQ…LQRL), and 162-191 (TDIF…FSIV). Ca(2+) contacts are provided by Asp36, Asp38, Ser40, Val42, and Glu47. Residues Asp103, Asp105, Ser107, Met109, and Glu114 each coordinate Ca(2+). Mg(2+)-binding residues include Asp169, Asp171, Asp173, and Trp175.

Homodimer and heterodimer; heterodimerizes (via the EF-hand 5) with PEF1. Isoform 1 and isoform 2 self-associate; probably forming homodimers. Interacts with CPNE4 (via VWFA domain). Interacts with PDCD6IP; the interaction is calcium-dependent. Interacts with RBM22. Interacts with PLSCR4. Interacts with ANXA7 and TSG101. Interacts with DAPK1. Interacts with SEC31A; the interaction is calcium-dependent and promotes monoubiquitination of SEC31A. Interacts with ANXA11 (via N-terminus); the interaction is calcium-dependent. Interacts with PLSCR3 (via N-terminus); the interaction is calcium-dependent. Interacts with MCOLN1; the interaction is calcium-dependent. Interacts with KDR; the interaction is calcium-dependent. Interacts with HEBP2; the interaction is calcium-dependent. Interacts with TFG. Isoform 1: Interacts with SHISA5, leading to stabilize it. Isoform 2: Does not interact with SHISA5. Isoform 2: Does not interact with PDCD6IP, TSG101, ANXA7 and ANXA11.

The protein resides in the endoplasmic reticulum membrane. It is found in the cytoplasmic vesicle. Its subcellular location is the COPII-coated vesicle membrane. The protein localises to the cytoplasm. It localises to the nucleus. The protein resides in the endosome. In terms of biological role, calcium sensor that plays a key role in processes such as endoplasmic reticulum (ER)-Golgi vesicular transport, endosomal biogenesis or membrane repair. Acts as an adapter that bridges unrelated proteins or stabilizes weak protein-protein complexes in response to calcium: calcium-binding triggers exposure of apolar surface, promoting interaction with different sets of proteins thanks to 3 different hydrophobic pockets, leading to translocation to membranes. Involved in ER-Golgi transport by promoting the association between PDCD6IP and TSG101, thereby bridging together the ESCRT-III and ESCRT-I complexes. Together with PEF1, acts as a calcium-dependent adapter for the BCR(KLHL12) complex, a complex involved in ER-Golgi transport by regulating the size of COPII coats. In response to cytosolic calcium increase, the heterodimer formed with PEF1 interacts with, and bridges together the BCR(KLHL12) complex and SEC31 (SEC31A or SEC31B), promoting monoubiquitination of SEC31 and subsequent collagen export, which is required for neural crest specification. Involved in the regulation of the distribution and function of MCOLN1 in the endosomal pathway. Promotes localization and polymerization of TFG at endoplasmic reticulum exit site. Required for T-cell receptor-, Fas-, and glucocorticoid-induced apoptosis. May mediate Ca(2+)-regulated signals along the death pathway: interaction with DAPK1 can accelerate apoptotic cell death by increasing caspase-3 activity. Its role in apoptosis may however be indirect, as suggested by knockout experiments. May inhibit KDR/VEGFR2-dependent angiogenesis; the function involves inhibition of VEGF-induced phosphorylation of the Akt signaling pathway. Its function is as follows. Has a lower Ca(2+) affinity than isoform 1. This is Programmed cell death protein 6 (Pdcd6) from Mus musculus (Mouse).